The following is a 208-amino-acid chain: Tektin bundle-interacting protein 1 (208 aa).

As to quaternary structure, microtubule inner protein component of sperm flagellar doublet microtubules. Expressed in trachea multiciliated cells.

The protein resides in the cytoplasm. The protein localises to the cytoskeleton. It localises to the cilium axoneme. It is found in the flagellum axoneme. Its function is as follows. Microtubule inner protein (MIP) part of the dynein-decorated doublet microtubules (DMTs) in cilia axoneme, which is required for motile cilia beating. Located at the center of the tektin bundle where may function to recruit tektins or stabilize the bundle. The chain is Tektin bundle-interacting protein 1 (TEKTIP1) from Bos taurus (Bovine).